Reading from the N-terminus, the 341-residue chain is UDP-3-O-acylglucosamine N-acyltransferase 2 (341 aa).

His254 functions as the Proton acceptor in the catalytic mechanism.

This sequence belongs to the transferase hexapeptide repeat family. LpxD subfamily. As to quaternary structure, homotrimer.

The enzyme catalyses a UDP-3-O-[(3R)-3-hydroxyacyl]-alpha-D-glucosamine + a (3R)-hydroxyacyl-[ACP] = a UDP-2-N,3-O-bis[(3R)-3-hydroxyacyl]-alpha-D-glucosamine + holo-[ACP] + H(+). It functions in the pathway bacterial outer membrane biogenesis; LPS lipid A biosynthesis. Functionally, catalyzes the N-acylation of UDP-3-O-acylglucosamine using 3-hydroxyacyl-ACP as the acyl donor. Is involved in the biosynthesis of lipid A, a phosphorylated glycolipid that anchors the lipopolysaccharide to the outer membrane of the cell. The sequence is that of UDP-3-O-acylglucosamine N-acyltransferase 2 from Nitrobacter winogradskyi (strain ATCC 25391 / DSM 10237 / CIP 104748 / NCIMB 11846 / Nb-255).